A 364-amino-acid chain; its full sequence is Probable dual-specificity RNA methyltransferase RlmN (364 aa).

Glu-109 functions as the Proton acceptor in the catalytic mechanism. The region spanning 123 to 351 is the Radical SAM core domain; the sequence is PKARLTVCVS…VSVRYSRGLE (229 aa). A disulfide bond links Cys-130 and Cys-356. 3 residues coordinate [4Fe-4S] cluster: Cys-137, Cys-141, and Cys-144. S-adenosyl-L-methionine-binding positions include 184 to 185, Ser-214, 237 to 239, and Asn-313; these read GE and SLH. The S-methylcysteine intermediate role is filled by Cys-356.

It belongs to the radical SAM superfamily. RlmN family. Requires [4Fe-4S] cluster as cofactor.

Its subcellular location is the cytoplasm. The enzyme catalyses adenosine(2503) in 23S rRNA + 2 reduced [2Fe-2S]-[ferredoxin] + 2 S-adenosyl-L-methionine = 2-methyladenosine(2503) in 23S rRNA + 5'-deoxyadenosine + L-methionine + 2 oxidized [2Fe-2S]-[ferredoxin] + S-adenosyl-L-homocysteine. It carries out the reaction adenosine(37) in tRNA + 2 reduced [2Fe-2S]-[ferredoxin] + 2 S-adenosyl-L-methionine = 2-methyladenosine(37) in tRNA + 5'-deoxyadenosine + L-methionine + 2 oxidized [2Fe-2S]-[ferredoxin] + S-adenosyl-L-homocysteine. Functionally, specifically methylates position 2 of adenine 2503 in 23S rRNA and position 2 of adenine 37 in tRNAs. In Nostoc punctiforme (strain ATCC 29133 / PCC 73102), this protein is Probable dual-specificity RNA methyltransferase RlmN.